The primary structure comprises 202 residues: Holliday junction branch migration complex subunit RuvA (202 aa).

The segment at 1-64 (MIDFLKGRLV…ETALEMFGFS (64 aa)) is domain I. Residues 65-143 (SELDRTAFLL…KQQVAVSAEL (79 aa)) are domain II. Positions 144–152 (PASDGVPVL) are flexible linker. The interval 152–202 (LAGRAENEALAALISLGYTPREAREALNRLPDRKLDAAGLVHAALRIMGSQ) is domain III.

It belongs to the RuvA family. As to quaternary structure, homotetramer. Forms an RuvA(8)-RuvB(12)-Holliday junction (HJ) complex. HJ DNA is sandwiched between 2 RuvA tetramers; dsDNA enters through RuvA and exits via RuvB. An RuvB hexamer assembles on each DNA strand where it exits the tetramer. Each RuvB hexamer is contacted by two RuvA subunits (via domain III) on 2 adjacent RuvB subunits; this complex drives branch migration. In the full resolvosome a probable DNA-RuvA(4)-RuvB(12)-RuvC(2) complex forms which resolves the HJ.

Its subcellular location is the cytoplasm. The RuvA-RuvB-RuvC complex processes Holliday junction (HJ) DNA during genetic recombination and DNA repair, while the RuvA-RuvB complex plays an important role in the rescue of blocked DNA replication forks via replication fork reversal (RFR). RuvA specifically binds to HJ cruciform DNA, conferring on it an open structure. The RuvB hexamer acts as an ATP-dependent pump, pulling dsDNA into and through the RuvAB complex. HJ branch migration allows RuvC to scan DNA until it finds its consensus sequence, where it cleaves and resolves the cruciform DNA. This is Holliday junction branch migration complex subunit RuvA from Desulforudis audaxviator (strain MP104C).